A 60-amino-acid chain; its full sequence is DNA gyrase inhibitor YacG (60 aa).

Positions 3, 6, 18, and 22 each coordinate Zn(2+). The interval 38 to 60 (PASSEDEEEPLDQEAETPVAPRH) is disordered. The span at 41–52 (SEDEEEPLDQEA) shows a compositional bias: acidic residues.

This sequence belongs to the DNA gyrase inhibitor YacG family. As to quaternary structure, interacts with GyrB. Zn(2+) serves as cofactor.

Inhibits all the catalytic activities of DNA gyrase by preventing its interaction with DNA. Acts by binding directly to the C-terminal domain of GyrB, which probably disrupts DNA binding by the gyrase. The sequence is that of DNA gyrase inhibitor YacG from Ruegeria pomeroyi (strain ATCC 700808 / DSM 15171 / DSS-3) (Silicibacter pomeroyi).